Consider the following 264-residue polypeptide: ATP synthase subunit b 1 (264 aa).

A helical transmembrane segment spans residues 2–22 (LFDWFTFWAQLLNFLILVWLL). Residues 240–264 (ASSALLDGPDDEMNEEEGHAGKDAD) are disordered. Basic and acidic residues predominate over residues 255–264 (EEGHAGKDAD).

This sequence belongs to the ATPase B chain family. F-type ATPases have 2 components, F(1) - the catalytic core - and F(0) - the membrane proton channel. F(1) has five subunits: alpha(3), beta(3), gamma(1), delta(1), epsilon(1). F(0) has four main subunits: a(1), b(2) and c(10-14). The alpha and beta chains form an alternating ring which encloses part of the gamma chain. F(1) is attached to F(0) by a central stalk formed by the gamma and epsilon chains, while a peripheral stalk is formed by the delta and b chains.

The protein localises to the cell inner membrane. In terms of biological role, f(1)F(0) ATP synthase produces ATP from ADP in the presence of a proton or sodium gradient. F-type ATPases consist of two structural domains, F(1) containing the extramembraneous catalytic core and F(0) containing the membrane proton channel, linked together by a central stalk and a peripheral stalk. During catalysis, ATP synthesis in the catalytic domain of F(1) is coupled via a rotary mechanism of the central stalk subunits to proton translocation. Its function is as follows. Component of the F(0) channel, it forms part of the peripheral stalk, linking F(1) to F(0). This chain is ATP synthase subunit b 1, found in Chlorobium luteolum (strain DSM 273 / BCRC 81028 / 2530) (Pelodictyon luteolum).